A 513-amino-acid chain; its full sequence is Laccase (513 aa).

4 consecutive Plastocyanin-like domains span residues 45-81 (PTRL…STHF), 101-178 (KTVV…HDPK), 240-318 (WPYL…ILAN), and 378-509 (QDEY…MDIT). 4 residues coordinate Cu cation: His-105, His-107, His-153, and His-155. Positions 419, 422, 424, 491, 492, 493, 497, and 502 each coordinate Cu cation.

The protein belongs to the multicopper oxidase family. Monomer. The cofactor is Cu(2+).

It localises to the spore coat. It catalyses the reaction 4 hydroquinone + O2 = 4 benzosemiquinone + 2 H2O. The enzyme catalyses 2 (4Z,15Z)-bilirubin IXalpha + O2 = 2 biliverdin IXalpha + 2 H2O. Inhibited by azide. Its function is as follows. Multicopper oxidase that catalyzes the oxidation of a variety of substrates, including phenolic and non-phenolic compounds. Substrates include syringaldazine (SGZ), 2,6-dimethoxyphenol (2,6-DMP) and the non-phenolic compound 2,2'-azino-bis(3-ethylbenzothiazoline-6-sulfonic acid) (ABTS). Has no tyrosinase activity. Is implicated in the biosynthesis of a brownish pigment that characterizes sporulating colonies of B.subtilis, and which appears to be a melanin-like product and to confer protection against UV light. In terms of biological role, in vitro, also shows strong bilirubin oxidase (BOD) activity, and can catalyze the oxidation of free bilirubin (UB), direct bilirubin (conjugated with glucuronic acid, DB) and ditaurobilirubin. The polypeptide is Laccase (Bacillus subtilis (strain 168)).